The following is a 122-amino-acid chain: Small ribosomal subunit protein uS12cz/uS12cy (122 aa).

This sequence belongs to the universal ribosomal protein uS12 family. Part of the 30S ribosomal subunit.

It localises to the plastid. It is found in the chloroplast. In terms of biological role, with S4 and S5 plays an important role in translational accuracy. Located at the interface of the 30S and 50S subunits. The sequence is that of Small ribosomal subunit protein uS12cz/uS12cy (rps12-A) from Triticum aestivum (Wheat).